The sequence spans 1175 residues: DNA-directed RNA polymerase subunit beta (1175 aa).

Residues 12 to 33 (QSKTDRPQSSSNGSSSLNGSVP) are disordered. Residues 20–31 (SSSNGSSSLNGS) show a composition bias toward low complexity.

It belongs to the RNA polymerase beta chain family. The RNAP catalytic core consists of 2 alpha, 1 beta, 1 beta' and 1 omega subunit. When a sigma factor is associated with the core the holoenzyme is formed, which can initiate transcription.

It catalyses the reaction RNA(n) + a ribonucleoside 5'-triphosphate = RNA(n+1) + diphosphate. In terms of biological role, DNA-dependent RNA polymerase catalyzes the transcription of DNA into RNA using the four ribonucleoside triphosphates as substrates. The polypeptide is DNA-directed RNA polymerase subunit beta (Mycobacterium avium (strain 104)).